We begin with the raw amino-acid sequence, 44 residues long: uncharacterized protein (44 aa).

This is an uncharacterized protein from Vaccinia virus (strain Western Reserve) (VACV).